The primary structure comprises 113 residues: Hydrogenase maturation factor HypA (113 aa).

His2 is a Ni(2+) binding site. Cys73, Cys76, Cys89, and Cys92 together coordinate Zn(2+).

Belongs to the HypA/HybF family.

Involved in the maturation of [NiFe] hydrogenases. Required for nickel insertion into the metal center of the hydrogenase. The sequence is that of Hydrogenase maturation factor HypA from Picosynechococcus sp. (strain ATCC 27264 / PCC 7002 / PR-6) (Agmenellum quadruplicatum).